Reading from the N-terminus, the 177-residue chain is Ribulose bisphosphate carboxylase small subunit, chloroplastic 2 (177 aa).

A chloroplast-targeting transit peptide spans 1-56 (MASSMMASTAAVARAGPAQSNMVAPFNGLRSSVAFPATRKANKNLSTLPSNGGKVS).

It belongs to the RuBisCO small chain family. Heterohexadecamer of 8 large and 8 small subunits.

It localises to the plastid. The protein resides in the chloroplast. RuBisCO catalyzes two reactions: the carboxylation of D-ribulose 1,5-bisphosphate, the primary event in carbon dioxide fixation, as well as the oxidative fragmentation of the pentose substrate. Both reactions occur simultaneously and in competition at the same active site. Although the small subunit is not catalytic it is essential for maximal activity. The sequence is that of Ribulose bisphosphate carboxylase small subunit, chloroplastic 2 from Lemna gibba (Swollen duckweed).